Here is a 474-residue protein sequence, read N- to C-terminus: Bifunctional protein HldE (474 aa).

Residues 1–318 (MKLSMPRFDQ…RAVQREQGSE (318 aa)) form a ribokinase region. 194–197 (NLSE) contributes to the ATP binding site. Asp-263 is a catalytic residue. Residues 343-474 (FTNGCFDILH…AIVEKIRQKG (132 aa)) are cytidylyltransferase.

In the N-terminal section; belongs to the carbohydrate kinase PfkB family. It in the C-terminal section; belongs to the cytidylyltransferase family. In terms of assembly, homodimer.

It catalyses the reaction D-glycero-beta-D-manno-heptose 7-phosphate + ATP = D-glycero-beta-D-manno-heptose 1,7-bisphosphate + ADP + H(+). It carries out the reaction D-glycero-beta-D-manno-heptose 1-phosphate + ATP + H(+) = ADP-D-glycero-beta-D-manno-heptose + diphosphate. It participates in nucleotide-sugar biosynthesis; ADP-L-glycero-beta-D-manno-heptose biosynthesis; ADP-L-glycero-beta-D-manno-heptose from D-glycero-beta-D-manno-heptose 7-phosphate: step 1/4. Its pathway is nucleotide-sugar biosynthesis; ADP-L-glycero-beta-D-manno-heptose biosynthesis; ADP-L-glycero-beta-D-manno-heptose from D-glycero-beta-D-manno-heptose 7-phosphate: step 3/4. The protein operates within bacterial outer membrane biogenesis; LPS core biosynthesis. In terms of biological role, catalyzes the phosphorylation of D-glycero-D-manno-heptose 7-phosphate at the C-1 position to selectively form D-glycero-beta-D-manno-heptose-1,7-bisphosphate. Catalyzes the ADP transfer from ATP to D-glycero-beta-D-manno-heptose 1-phosphate, yielding ADP-D-glycero-beta-D-manno-heptose. This Pseudomonas aeruginosa (strain ATCC 15692 / DSM 22644 / CIP 104116 / JCM 14847 / LMG 12228 / 1C / PRS 101 / PAO1) protein is Bifunctional protein HldE.